A 286-amino-acid polypeptide reads, in one-letter code: MASQFQAYFKLTKFRLTSTVAFSSGMGYILAERGQVDWLNLVLFLIGGFSITVSANIINQIIERESDKLMKRTASRPLPEGIITVQQAIITSALFLIAGTVILAVYSTLNALILSLISLVIYSFIYTPLKTVSPIAVFIGAFPGAFPPMIGWIAVTGEYGWEPGVLFAIQFLWQFPHFWAIAWVLDEEYKKAGIKLLPTKDGRSKHTATIIMTYTLCLLPLGFLPYLFGMSGITSAYIALACGILFFFQTMYLWKECSVKAALLLMFGSFLYLPIVQIAFVLDKIY.

Helical transmembrane passes span 14–31, 38–58, 94–114, 135–155, 165–185, 207–227, 228–248, and 262–282; these read FRLT…YILA, WLNL…ANII, LFLI…ALIL, IAVF…WIAV, VLFA…AWVL, TATI…LPYL, FGMS…LFFF, and ALLL…AFVL.

The protein belongs to the UbiA prenyltransferase family. Protoheme IX farnesyltransferase subfamily.

The protein localises to the cell inner membrane. It catalyses the reaction heme b + (2E,6E)-farnesyl diphosphate + H2O = Fe(II)-heme o + diphosphate. It functions in the pathway porphyrin-containing compound metabolism; heme O biosynthesis; heme O from protoheme: step 1/1. Functionally, converts heme B (protoheme IX) to heme O by substitution of the vinyl group on carbon 2 of heme B porphyrin ring with a hydroxyethyl farnesyl side group. In Cytophaga hutchinsonii (strain ATCC 33406 / DSM 1761 / CIP 103989 / NBRC 15051 / NCIMB 9469 / D465), this protein is Protoheme IX farnesyltransferase.